The chain runs to 96 residues: Ubiquitin-related modifier 1 (96 aa).

At G96 the chain carries 1-thioglycine. G96 participates in a covalent cross-link: Glycyl lysine isopeptide (Gly-Lys) (interchain with K-? in acceptor proteins).

It belongs to the URM1 family. Post-translationally, C-terminal thiocarboxylation occurs in 2 steps, it is first acyl-adenylated (-COAMP) via the hesA/moeB/thiF part of UBA4, then thiocarboxylated (-COSH) via the rhodanese domain of UBA4.

Its subcellular location is the cytoplasm. The protein operates within tRNA modification; 5-methoxycarbonylmethyl-2-thiouridine-tRNA biosynthesis. Acts as a sulfur carrier required for 2-thiolation of mcm(5)S(2)U at tRNA wobble positions of cytosolic tRNA(Lys), tRNA(Glu) and tRNA(Gln). Serves as sulfur donor in tRNA 2-thiolation reaction by being thiocarboxylated (-COSH) at its C-terminus by the MOCS3 homolog UBA4. The sulfur is then transferred to tRNA to form 2-thiolation of mcm(5)S(2)U. Prior mcm(5) tRNA modification by the elongator complex is required for 2-thiolation. Also acts as a ubiquitin-like protein (UBL) that is covalently conjugated via an isopeptide bond to lysine residues of target proteins such as AHP1. The thiocarboxylated form serves as substrate for conjugation and oxidative stress specifically induces the formation of UBL-protein conjugates. This chain is Ubiquitin-related modifier 1, found in Encephalitozoon cuniculi (strain GB-M1) (Microsporidian parasite).